A 390-amino-acid chain; its full sequence is Putative RING-H2 finger protein ATL12 (390 aa).

The signal sequence occupies residues 1-22 (MNSPQEISILFFFIIFLDYVSA). A helical transmembrane segment spans residues 41–61 (LAIITGVFSIVFTLTFVLLVY). The segment at 124-166 (CSVCLSKFEDVEILRLLPKCRHAFHIGCIDQWLEQHATCPLCR) adopts an RING-type; atypical zinc-finger fold.

The protein belongs to the RING-type zinc finger family. ATL subfamily.

The protein resides in the membrane. The catalysed reaction is S-ubiquitinyl-[E2 ubiquitin-conjugating enzyme]-L-cysteine + [acceptor protein]-L-lysine = [E2 ubiquitin-conjugating enzyme]-L-cysteine + N(6)-ubiquitinyl-[acceptor protein]-L-lysine.. It participates in protein modification; protein ubiquitination. The polypeptide is Putative RING-H2 finger protein ATL12 (ATL12) (Arabidopsis thaliana (Mouse-ear cress)).